The sequence spans 114 residues: Large ribosomal subunit protein eL30 (114 aa).

This sequence belongs to the eukaryotic ribosomal protein eL30 family.

This Branchiostoma belcheri (Amphioxus) protein is Large ribosomal subunit protein eL30 (RPL30).